Here is a 165-residue protein sequence, read N- to C-terminus: Protein SprT (165 aa).

One can recognise a SprT-like domain in the interval 20-162 (EKLAQANLKL…YRCVHCGEQL (143 aa)). Zn(2+) is bound at residue histidine 78. Residue glutamate 79 is part of the active site. Residue histidine 82 participates in Zn(2+) binding.

This sequence belongs to the SprT family. It depends on Zn(2+) as a cofactor.

It is found in the cytoplasm. The chain is Protein SprT from Escherichia coli (strain SMS-3-5 / SECEC).